The primary structure comprises 1282 residues: Trafficking protein particle complex subunit 8 (1282 aa).

The tract at residues 245 to 287 is disordered; the sequence is TDAIAPGPNGASNQQSPSSPTSSVATISSTMPAVGSVSPNSHP. The span at 255 to 273 shows a compositional bias: low complexity; it reads ASNQQSPSSPTSSVATISS.

In terms of biological role, plays a role in endoplasmic reticulum to Golgi apparatus trafficking at a very early stage. Involved in collagen secretion. The protein is Trafficking protein particle complex subunit 8 of Caenorhabditis elegans.